We begin with the raw amino-acid sequence, 277 residues long: Putative pyruvate, phosphate dikinase regulatory protein (277 aa).

Residue 156–163 (GVSRTSKT) participates in ADP binding.

Belongs to the pyruvate, phosphate/water dikinase regulatory protein family. PDRP subfamily.

The enzyme catalyses N(tele)-phospho-L-histidyl/L-threonyl-[pyruvate, phosphate dikinase] + ADP = N(tele)-phospho-L-histidyl/O-phospho-L-threonyl-[pyruvate, phosphate dikinase] + AMP + H(+). The catalysed reaction is N(tele)-phospho-L-histidyl/O-phospho-L-threonyl-[pyruvate, phosphate dikinase] + phosphate + H(+) = N(tele)-phospho-L-histidyl/L-threonyl-[pyruvate, phosphate dikinase] + diphosphate. In terms of biological role, bifunctional serine/threonine kinase and phosphorylase involved in the regulation of the pyruvate, phosphate dikinase (PPDK) by catalyzing its phosphorylation/dephosphorylation. The chain is Putative pyruvate, phosphate dikinase regulatory protein from Carboxydothermus hydrogenoformans (strain ATCC BAA-161 / DSM 6008 / Z-2901).